Consider the following 479-residue polypeptide: ATP-dependent protease ATPase subunit HslU (479 aa).

ATP contacts are provided by residues Ile32, 74 to 79 (GVGKTE), Asp290, Glu355, and Arg427.

Belongs to the ClpX chaperone family. HslU subfamily. A double ring-shaped homohexamer of HslV is capped on each side by a ring-shaped HslU homohexamer. The assembly of the HslU/HslV complex is dependent on binding of ATP.

Its subcellular location is the cytoplasm. In terms of biological role, ATPase subunit of a proteasome-like degradation complex; this subunit has chaperone activity. The binding of ATP and its subsequent hydrolysis by HslU are essential for unfolding of protein substrates subsequently hydrolyzed by HslV. HslU recognizes the N-terminal part of its protein substrates and unfolds these before they are guided to HslV for hydrolysis. The sequence is that of ATP-dependent protease ATPase subunit HslU from Leptospira interrogans serogroup Icterohaemorrhagiae serovar Lai (strain 56601).